A 399-amino-acid chain; its full sequence is Glucose-1-phosphate adenylyltransferase (399 aa).

Alpha-D-glucose 1-phosphate is bound by residues Y100, G165, 180–181 (EK), and S191.

The protein belongs to the bacterial/plant glucose-1-phosphate adenylyltransferase family. As to quaternary structure, homotetramer.

It carries out the reaction alpha-D-glucose 1-phosphate + ATP + H(+) = ADP-alpha-D-glucose + diphosphate. Its pathway is glycan biosynthesis; glycogen biosynthesis. Involved in the biosynthesis of ADP-glucose, a building block required for the elongation reactions to produce glycogen. Catalyzes the reaction between ATP and alpha-D-glucose 1-phosphate (G1P) to produce pyrophosphate and ADP-Glc. This is Glucose-1-phosphate adenylyltransferase from Desulforamulus reducens (strain ATCC BAA-1160 / DSM 100696 / MI-1) (Desulfotomaculum reducens).